We begin with the raw amino-acid sequence, 372 residues long: Alanine racemase (372 aa).

Lys-36 acts as the Proton acceptor; specific for D-alanine in catalysis. Lys-36 carries the N6-(pyridoxal phosphate)lysine modification. Position 134 (Arg-134) interacts with substrate. Residue Tyr-266 is the Proton acceptor; specific for L-alanine of the active site. Met-314 contributes to the substrate binding site.

This sequence belongs to the alanine racemase family. Pyridoxal 5'-phosphate is required as a cofactor.

It carries out the reaction L-alanine = D-alanine. It functions in the pathway amino-acid biosynthesis; D-alanine biosynthesis; D-alanine from L-alanine: step 1/1. Its function is as follows. Catalyzes the interconversion of L-alanine and D-alanine. May also act on other amino acids. This is Alanine racemase (alr) from Nitratidesulfovibrio vulgaris (strain DSM 19637 / Miyazaki F) (Desulfovibrio vulgaris).